A 209-amino-acid polypeptide reads, in one-letter code: Dual specificity phosphatase 29 (209 aa).

Positions 44-193 (NHVNEVWPNL…LRELDIQLAL (150 aa)) constitute a Tyrosine-protein phosphatase domain. Position 137-144 (137-144 (NCAMGRSR)) interacts with substrate. Catalysis depends on cysteine 138, which acts as the Phosphocysteine intermediate.

This sequence belongs to the protein-tyrosine phosphatase family. Non-receptor class dual specificity subfamily.

Its subcellular location is the cytoplasm. The protein localises to the nucleus. The enzyme catalyses O-phospho-L-tyrosyl-[protein] + H2O = L-tyrosyl-[protein] + phosphate. The catalysed reaction is O-phospho-L-seryl-[protein] + H2O = L-seryl-[protein] + phosphate. It carries out the reaction O-phospho-L-threonyl-[protein] + H2O = L-threonyl-[protein] + phosphate. In terms of biological role, dual specificity phosphatase able to dephosphorylate phosphotyrosine, phosphoserine and phosphothreonine residues within the same substrate, with a preference for phosphotyrosine as a substrate. Involved in the modulation of AMPK and MAPK1/2 signaling pathways. The polypeptide is Dual specificity phosphatase 29 (dusp29) (Xenopus tropicalis (Western clawed frog)).